We begin with the raw amino-acid sequence, 687 residues long: Outer dynein arm-docking complex subunit 1 (687 aa).

Coiled coils occupy residues 100 to 193, 222 to 267, and 341 to 421; these read QVRV…YLNV, REEA…LKLK, and INEQ…LFTR. Positions 126-147 are disordered; sequence SRNSAHSKNARSPGCVQHDKVK. Disordered stretches follow at residues 363 to 388, 487 to 511, and 540 to 687; these read VSGR…QRVD, FPKK…AKDD, and ESTP…QSNY. The segment covering 366 to 388 has biased composition (basic and acidic residues); it reads RRSEEDRRAQQEQQRAELQQRVD. Over residues 544 to 556 the composition is skewed to low complexity; the sequence is SMTSSTQKVSSSS. 2 stretches are compositionally biased toward polar residues: residues 557–611 and 620–629; these read RLVT…SSRG and RSPNSSSYLG. Positions 660–680 are enriched in low complexity; it reads SPGPASSPGPASSTGQASSTS.

This sequence belongs to the ODA1/DCC2 family. Component of the outer dynein arm-docking complex along with ODAD2, ODAD3, ODAD4 and CLXN. Interacts with ODAD3. Interacts with ODAD4; this interaction may facilitate the recruitment and/or attachment of outer dynein arm docking complex proteins, including ODAD1, ODAD3, and ODAD4 to ciliary axonemes. Interacts with DNAH9. Interacts with MNS1. Interacts with PIERCE1 and PIERCE2; the interactions link the outer dynein arms docking complex (ODA-DC) to the internal microtubule inner proteins (MIP) in cilium axoneme. As to expression, expressed in trachea multiciliated cells.

The protein localises to the cytoplasm. It localises to the cytoskeleton. It is found in the cilium axoneme. Component of the outer dynein arm-docking complex (ODA-DC) that mediates outer dynein arms (ODA) binding onto the doublet microtubule. Involved in mediating assembly of both ODAs and their axonemal docking complex onto ciliary microtubules. This chain is Outer dynein arm-docking complex subunit 1 (ODAD1), found in Bos taurus (Bovine).